Reading from the N-terminus, the 349-residue chain is Ferredoxin--NADP reductase (349 aa).

Residues D43, Q51, Y56, V96, F131, D295, and S336 each contribute to the FAD site.

This sequence belongs to the ferredoxin--NADP reductase type 2 family. As to quaternary structure, homodimer. Requires FAD as cofactor.

It carries out the reaction 2 reduced [2Fe-2S]-[ferredoxin] + NADP(+) + H(+) = 2 oxidized [2Fe-2S]-[ferredoxin] + NADPH. The chain is Ferredoxin--NADP reductase from Paraburkholderia phytofirmans (strain DSM 17436 / LMG 22146 / PsJN) (Burkholderia phytofirmans).